The sequence spans 533 residues: Lymphocyte cytosolic protein 2 (533 aa).

The SAM domain occupies 15-81; sequence WDPDSLADYF…INKNEERRSI (67 aa). Phosphotyrosine is present on Y23. The disordered stretch occupies residues 78 to 417; the sequence is RRSIFTRKPQ…PPSPAEEENS (340 aa). Residues 108 to 155 are compositionally biased toward acidic residues; sequence FEEDDYESPNDDQDGEDDGDYESPNEEEEAPVEDDADYEPPPSNDEEA. Pro residues predominate over residues 184-213; sequence QQPPVPPQRPMAALPPPPAGRNHSPLPPPQ. Residue S207 is modified to Phosphoserine. 2 stretches are compositionally biased toward polar residues: residues 337 to 350 and 365 to 376; these read MSSN…TKPS and SESNSSFPQSAS. A phosphoserine mark is found at S376 and S410. Pro residues predominate over residues 400-411; that stretch reads LPLPNKPRPPSP. Residues 422 to 530 form the SH2 domain; sequence WYVSYITRPE…RYQCTLTHAA (109 aa).

In terms of assembly, interacts with SLA. Interacts with CBLB. Interacts with GRB2. Interacts with SHB. Interacts with PRAM1. Interacts (via SH2 domain) with CD6 (via tyrosine phosphorylated C-terminus). Interacts with FYB1 and the phosphorylated form of FYB2. Interacts with 14-3-3 adapter/YWHAZ; this phosphorylation leads to YWHAZ proteolytic degradation. Interacts with VAV1; this interaction plays a role in TCR-mediated cytokine production. Interacts with AGER; this interaction plays an important role in AGER-mediated pro-inflammatory responses and cytokine release. Phosphorylated after T-cell receptor activation by ZAP70, ITK and TXK, which leads to the up-regulation of Th1 preferred cytokine IL-2. SYK-dependent phosphorylation is required for recruitment of PI3K signaling components. In terms of tissue distribution, highly expressed in spleen, thymus and peripheral blood leukocytes. Highly expressed also in T-cell and monocytic cell lines, expressed at lower level in B-cell lines. Not detected in fibroblast or neuroblastoma cell lines.

The protein resides in the cytoplasm. Its function is as follows. Adapter protein primarily involved in signaling pathways within T-cells, as well as other immune cells such as platelets, mast cells, and natural killer (NK) cells. Plays a crucial role for transducing signal from the T-cell receptor (TCR) after antigen recognition leading to T-cell activation. Mechanistically, once phosphorylated by the kinase ZAP70, mediates interactions with the guanine-nucleotide exchange factor VAV1, the adapter protein NCK and the kinase ITK. In turn, stimulates the activation of PKC-theta/PRKCQ and NF-kappa-B transcriptional activity in response to CD3 and CD28 costimulation. Also plays an essential role in AGER-induced signaling pathways including p38 MAPK and ERK1/2 activation leading to cytokine release and pro-inflammatory responses. This Homo sapiens (Human) protein is Lymphocyte cytosolic protein 2 (LCP2).